A 122-amino-acid chain; its full sequence is Small ribosomal subunit protein uS13 (122 aa).

The tract at residues 95-122 (GLPVRGQRTHTNARTRKGPAKSIAGKKK) is disordered.

This sequence belongs to the universal ribosomal protein uS13 family. As to quaternary structure, part of the 30S ribosomal subunit. Forms a loose heterodimer with protein S19. Forms two bridges to the 50S subunit in the 70S ribosome.

In terms of biological role, located at the top of the head of the 30S subunit, it contacts several helices of the 16S rRNA. In the 70S ribosome it contacts the 23S rRNA (bridge B1a) and protein L5 of the 50S subunit (bridge B1b), connecting the 2 subunits; these bridges are implicated in subunit movement. Contacts the tRNAs in the A and P-sites. This is Small ribosomal subunit protein uS13 from Rhodopseudomonas palustris (strain BisB18).